We begin with the raw amino-acid sequence, 330 residues long: Ketol-acid reductoisomerase (NADP(+)) (330 aa).

The 181-residue stretch at 1–181 (MNVYYEKDAD…GGTKAGVIET (181 aa)) folds into the KARI N-terminal Rossmann domain. NADP(+)-binding positions include 24–27 (YGSQ), R47, S50, S52, and 82–85 (DQNQ). H107 is a catalytic residue. An NADP(+)-binding site is contributed by G133. Positions 182-327 (NFKNETETDL…AKLRNMMSWL (146 aa)) constitute a KARI C-terminal knotted domain. Mg(2+) is bound by residues D190, E194, E226, and E230. S251 is a substrate binding site.

The protein belongs to the ketol-acid reductoisomerase family. It depends on Mg(2+) as a cofactor.

It catalyses the reaction (2R)-2,3-dihydroxy-3-methylbutanoate + NADP(+) = (2S)-2-acetolactate + NADPH + H(+). It carries out the reaction (2R,3R)-2,3-dihydroxy-3-methylpentanoate + NADP(+) = (S)-2-ethyl-2-hydroxy-3-oxobutanoate + NADPH + H(+). It participates in amino-acid biosynthesis; L-isoleucine biosynthesis; L-isoleucine from 2-oxobutanoate: step 2/4. Its pathway is amino-acid biosynthesis; L-valine biosynthesis; L-valine from pyruvate: step 2/4. Functionally, involved in the biosynthesis of branched-chain amino acids (BCAA). Catalyzes an alkyl-migration followed by a ketol-acid reduction of (S)-2-acetolactate (S2AL) to yield (R)-2,3-dihydroxy-isovalerate. In the isomerase reaction, S2AL is rearranged via a Mg-dependent methyl migration to produce 3-hydroxy-3-methyl-2-ketobutyrate (HMKB). In the reductase reaction, this 2-ketoacid undergoes a metal-dependent reduction by NADPH to yield (R)-2,3-dihydroxy-isovalerate. The sequence is that of Ketol-acid reductoisomerase (NADP(+)) from Chlorobium chlorochromatii (strain CaD3).